The chain runs to 145 residues: Ribosome maturation factor RimP (145 aa).

This sequence belongs to the RimP family.

Its subcellular location is the cytoplasm. In terms of biological role, required for maturation of 30S ribosomal subunits. This is Ribosome maturation factor RimP from Azotobacter vinelandii (strain DJ / ATCC BAA-1303).